Here is an 80-residue protein sequence, read N- to C-terminus: Cell division protein ZapB (80 aa).

Residues 3 to 80 are a coiled coil; sequence FEVFEKLEAK…ALLGKMNEVN (78 aa).

It belongs to the ZapB family. Homodimer. The ends of the coiled-coil dimer bind to each other, forming polymers. Interacts with FtsZ.

The protein localises to the cytoplasm. In terms of biological role, non-essential, abundant cell division factor that is required for proper Z-ring formation. It is recruited early to the divisome by direct interaction with FtsZ, stimulating Z-ring assembly and thereby promoting cell division earlier in the cell cycle. Its recruitment to the Z-ring requires functional FtsA or ZipA. The protein is Cell division protein ZapB of Edwardsiella ictaluri (strain 93-146).